We begin with the raw amino-acid sequence, 180 residues long: Translation initiation factor IF-3 (180 aa).

The protein belongs to the IF-3 family. As to quaternary structure, monomer.

The protein localises to the cytoplasm. In terms of biological role, IF-3 binds to the 30S ribosomal subunit and shifts the equilibrium between 70S ribosomes and their 50S and 30S subunits in favor of the free subunits, thus enhancing the availability of 30S subunits on which protein synthesis initiation begins. In Mesoplasma florum (strain ATCC 33453 / NBRC 100688 / NCTC 11704 / L1) (Acholeplasma florum), this protein is Translation initiation factor IF-3.